A 214-amino-acid chain; its full sequence is Urease accessory protein UreE (214 aa).

The disordered stretch occupies residues 163–214 (NAEPSGVDHSHEATDSGHGYGEDHDHDHSHDHNHDHDHNHDHDHSHSHDSHE). The span at 168–214 (GVDHSHEATDSGHGYGEDHDHDHSHDHNHDHDHNHDHDHSHSHDSHE) shows a compositional bias: basic and acidic residues.

Belongs to the UreE family.

It localises to the cytoplasm. Functionally, involved in urease metallocenter assembly. Binds nickel. Probably functions as a nickel donor during metallocenter assembly. In Natronomonas pharaonis (strain ATCC 35678 / DSM 2160 / CIP 103997 / JCM 8858 / NBRC 14720 / NCIMB 2260 / Gabara) (Halobacterium pharaonis), this protein is Urease accessory protein UreE.